The chain runs to 204 residues: MSTVVLRSNGNGSRRRRQRVARRRPAARTQPVVVVASNGPARRGRRRRPVGPRRGRTPRSGGGSRGETFVFSKDSLAGNSSGSITFGPSLSEYPAFQNGVLKAYHEYKITNCVLQFVSEASSTAAGSISYELDPHCKASSLASTINKFTITKTGARSFPAKMINGLEWHPSDEDQFRILYKGNGASSVAGSFKITLRVQLQNPK.

The segment covering 1–12 (MSTVVLRSNGNG) has biased composition (polar residues). The interval 1–74 (MSTVVLRSNG…RGETFVFSKD (74 aa)) is disordered. Over residues 13 to 26 (SRRRRQRVARRRPA) the composition is skewed to basic residues. Residues 27–41 (ARTQPVVVVASNGPA) show a composition bias toward low complexity. Residues 42–57 (RRGRRRRPVGPRRGRT) show a composition bias toward basic residues.

The protein belongs to the luteoviruses capsid protein family.

Its subcellular location is the virion. In terms of biological role, major capsid protein. The polypeptide is Major capsid protein (Avena byzantina (Oat)).